The chain runs to 182 residues: Kappa-casein (182 aa).

The N-terminal stretch at 1 to 20 is a signal peptide; the sequence is MKSFLLVVNALALTLPFLAV. Residues T133, T143, T148, and T151 are each glycosylated (O-linked (GalNAc...) threonine). T157 carries the phosphothreonine; alternate modification. A glycan (O-linked (GalNAc...) threonine; alternate) is linked at T157. T167, T169, and T178 each carry an O-linked (GalNAc...) threonine glycan.

Belongs to the kappa-casein family. In terms of assembly, heteromultimers composed of alpha-s1 casein and kappa casein linked by disulfide bonds. In terms of processing, the N-terminus is blocked. In terms of tissue distribution, mammary gland specific. Secreted in milk.

It is found in the secreted. Functionally, kappa-casein stabilizes micelle formation, preventing casein precipitation in milk. This chain is Kappa-casein (CSN3), found in Homo sapiens (Human).